We begin with the raw amino-acid sequence, 462 residues long: Argininosuccinate lyase (462 aa).

This sequence belongs to the lyase 1 family. Argininosuccinate lyase subfamily.

The protein resides in the cytoplasm. The catalysed reaction is 2-(N(omega)-L-arginino)succinate = fumarate + L-arginine. Its pathway is amino-acid biosynthesis; L-arginine biosynthesis; L-arginine from L-ornithine and carbamoyl phosphate: step 3/3. In Bacillus cereus (strain B4264), this protein is Argininosuccinate lyase.